We begin with the raw amino-acid sequence, 504 residues long: O-fucosyltransferase 39 (504 aa).

The helical; Signal-anchor for type II membrane protein transmembrane segment at 11-27 (WILSMFFFVVLFCNNVS) threads the bilayer. Asn-115 is a glycosylation site (N-linked (GlcNAc...) asparagine). Residue 288–290 (HLR) participates in substrate binding. N-linked (GlcNAc...) asparagine glycans are attached at residues Asn-359 and Asn-460.

Belongs to the glycosyltransferase GT106 family.

It is found in the membrane. It functions in the pathway glycan metabolism. The sequence is that of O-fucosyltransferase 39 from Arabidopsis thaliana (Mouse-ear cress).